A 195-amino-acid polypeptide reads, in one-letter code: Protein A43 (195 aa).

A signal peptide spans 1–21 (MMIKWIISILTMSIMPVLVYS). Over 23 to 166 (SIFRFRSEDV…YKDINDKYND (144 aa)) the chain is Extracellular. N-linked (GlcNAc...) asparagine; by host glycosylation is found at Asn66 and Asn115. A helical transmembrane segment spans residues 167–187 (IYDFTAICMLIASTLIVTIYV). The Cytoplasmic portion of the chain corresponds to 188–195 (FKKIKMNS).

It belongs to the orthopoxvirus OPG172 protein family.

It is found in the host membrane. Its subcellular location is the host cell surface. This Homo sapiens (Human) protein is Protein A43 (OPG172).